A 412-amino-acid chain; its full sequence is Histone-lysine N-methyltransferase SUV39H1 (412 aa).

An interaction with SIRT1 region spans residues 1 to 89; the sequence is MAENLKGCSV…LKCIRVLKQF (89 aa). A Chromo domain is found at 43-101; sequence FEVEYLCDYKKIREQEYYLVKWRGYPDSENTWEPRQNLKCIRVLKQFHKDLERELVRRH. Residues 179–240 enclose the Pre-SET domain; the sequence is VGCECQDCLL…DCPNRVVQKG (62 aa). Residues cysteine 181, cysteine 183, cysteine 186, cysteine 194, cysteine 195, cysteine 222, cysteine 226, cysteine 228, and cysteine 232 each contribute to the Zn(2+) site. Positions 243–366 constitute an SET domain; sequence YDLCIFRTND…AGEELTFDYN (124 aa). Position 254 to 256 (254 to 256) interacts with S-adenosyl-L-methionine; the sequence is RGW. Residues 255 to 377 are mediates interaction with MECOM; sequence GWGVRTLEKI…QVDPVDMEST (123 aa). An N6-acetyllysine modification is found at lysine 266. S-adenosyl-L-methionine contacts are provided by residues tyrosine 297 and 323–324; that span reads NH. Residue cysteine 326 participates in Zn(2+) binding. A Phosphoserine modification is found at serine 391. The region spanning 396-412 is the Post-SET domain; that stretch reads VRIECKCGTTACRKYLF. Zn(2+)-binding residues include cysteine 400, cysteine 402, and cysteine 407.

The protein belongs to the class V-like SAM-binding methyltransferase superfamily. Histone-lysine methyltransferase family. Suvar3-9 subfamily. Interacts with CCAR2 and GFI1B. Component of the eNoSC complex, composed of SIRT1, SUV39H1 and RRP8. Interacts with H3 and H4 histones. Interacts with DNMT3B, CBX1, CBX4, MBD1, RUNX1, RUNX3, MYOD1, SMAD5 and RB1. Interacts with SBF1 through the SET domain. Interacts with HDAC1 and HDAC2 through the N-terminus and associates with the core histone deacetylase complex composed of HDAC1, HDAC2, RBBP4 and RBBP7. Interacts (via SET domain) with MECOM; enhances MECOM transcriptional repression activity. Interacts with LMNA; the interaction increases stability of SUV39H1. The large PER complex involved in the histone methylation is composed of at least PER2, CBX3, TRIM28, SUV39H1 and/or SUV39H2; CBX3 mediates the formation of the complex. Post-translationally, phosphorylated on serine residues, and to a lesser degree, on threonine residues. In terms of processing, acetylated at Lys-266, leading to inhibition of enzyme activity. SIRT1-mediated deacetylation relieves this inhibition. Ubiquitinated by the DCX(DCAF13) E3 ubiquitin ligase complex, leading to its degradation. In terms of tissue distribution, widely expressed.

Its subcellular location is the nucleus. The protein resides in the nucleus lamina. The protein localises to the nucleoplasm. It is found in the chromosome. It localises to the centromere. It carries out the reaction L-lysyl(9)-[histone H3] + 3 S-adenosyl-L-methionine = N(6),N(6),N(6)-trimethyl-L-lysyl(9)-[histone H3] + 3 S-adenosyl-L-homocysteine + 3 H(+). With respect to regulation, negatively regulated by CCAR2. Histone methyltransferase that specifically trimethylates 'Lys-9' of histone H3 using monomethylated H3 'Lys-9' as substrate. H3 'Lys-9' trimethylation represents a specific tag for epigenetic transcriptional repression by recruiting HP1 (CBX1, CBX3 and/or CBX5) proteins to methylated histones. Mainly functions in heterochromatin regions, thereby playing a central role in the establishment of constitutive heterochromatin at pericentric and telomere regions. H3 'Lys-9' trimethylation is also required to direct DNA methylation at pericentric repeats. SUV39H1 is targeted to histone H3 via its interaction with RB1 and is involved in many processes, such as repression of MYOD1-stimulated differentiation, regulation of the control switch for exiting the cell cycle and entering differentiation, repression by the PML-RARA fusion protein, BMP-induced repression, repression of switch recombination to IgA and regulation of telomere length. Component of the eNoSC (energy-dependent nucleolar silencing) complex, a complex that mediates silencing of rDNA in response to intracellular energy status and acts by recruiting histone-modifying enzymes. The eNoSC complex is able to sense the energy status of cell: upon glucose starvation, elevation of NAD(+)/NADP(+) ratio activates SIRT1, leading to histone H3 deacetylation followed by dimethylation of H3 at 'Lys-9' (H3K9me2) by SUV39H1 and the formation of silent chromatin in the rDNA locus. Recruited by the PER complex to the E-box elements of the circadian target genes such as PER2 itself or PER1, contributes to the conversion of local chromatin to a heterochromatin-like repressive state through H3 'Lys-9' trimethylation. The polypeptide is Histone-lysine N-methyltransferase SUV39H1 (Suv39h1) (Mus musculus (Mouse)).